The primary structure comprises 278 residues: uncharacterized protein (278 aa).

It belongs to the manganese catalase family.

This is an uncharacterized protein from Bacillus subtilis (strain 168).